The following is a 188-amino-acid chain: Elongation factor P (188 aa).

Belongs to the elongation factor P family.

It localises to the cytoplasm. The protein operates within protein biosynthesis; polypeptide chain elongation. Involved in peptide bond synthesis. Stimulates efficient translation and peptide-bond synthesis on native or reconstituted 70S ribosomes in vitro. Probably functions indirectly by altering the affinity of the ribosome for aminoacyl-tRNA, thus increasing their reactivity as acceptors for peptidyl transferase. The sequence is that of Elongation factor P from Rickettsia rickettsii (strain Iowa).